The following is a 360-amino-acid chain: Peptide chain release factor 1 (360 aa).

Q237 carries the N5-methylglutamine modification.

This sequence belongs to the prokaryotic/mitochondrial release factor family. In terms of processing, methylated by PrmC. Methylation increases the termination efficiency of RF1.

It localises to the cytoplasm. Peptide chain release factor 1 directs the termination of translation in response to the peptide chain termination codons UAG and UAA. The chain is Peptide chain release factor 1 from Pseudomonas putida (strain ATCC 47054 / DSM 6125 / CFBP 8728 / NCIMB 11950 / KT2440).